Here is a 925-residue protein sequence, read N- to C-terminus: Protein PDC2 (925 aa).

Residues 63-138 (DANRLRKPNN…LSKMDVNISV (76 aa)) enclose the HTH CENPB-type domain. Disordered regions lie at residues 510–596 (DNNQ…RNSS), 674–693 (NEKAASDQNKSTDELPSSTA), and 904–925 (PTGGSNLPDSNNLHLPGNTGFF). Residues 513–537 (QNHLSMSQASHNPDYNSNHSNNAIE) are compositionally biased toward polar residues. The span at 538 to 563 (NTNNRGSNNNNNNNGSSNNINDNDSS) shows a compositional bias: low complexity. Over residues 565–596 (KYLQQNTVDNSTKTGNPGQPNISSMESQRNSS) the composition is skewed to polar residues. A compositionally biased stretch (basic and acidic residues) spans 674-686 (NEKAASDQNKSTD). Over residues 904–916 (PTGGSNLPDSNNL) the composition is skewed to polar residues.

Functionally, essential for the synthesis of pyruvate decarboxylase. May be important for a high basal level of PDC gene expression or play a positive role in the autoregulation control of PDC1 and PDC5. In Saccharomyces cerevisiae (strain ATCC 204508 / S288c) (Baker's yeast), this protein is Protein PDC2 (PDC2).